The following is a 130-amino-acid chain: ATP synthase epsilon chain (130 aa).

Belongs to the ATPase epsilon chain family. F-type ATPases have 2 components, CF(1) - the catalytic core - and CF(0) - the membrane proton channel. CF(1) has five subunits: alpha(3), beta(3), gamma(1), delta(1), epsilon(1). CF(0) has three main subunits: a, b and c.

It is found in the cell inner membrane. Produces ATP from ADP in the presence of a proton gradient across the membrane. This chain is ATP synthase epsilon chain, found in Sulfurimonas denitrificans (strain ATCC 33889 / DSM 1251) (Thiomicrospira denitrificans (strain ATCC 33889 / DSM 1251)).